A 440-amino-acid polypeptide reads, in one-letter code: D-serine dehydratase (440 aa).

N6-(pyridoxal phosphate)lysine is present on Lys116.

This sequence belongs to the serine/threonine dehydratase family. DsdA subfamily. In terms of assembly, monomer. Pyridoxal 5'-phosphate serves as cofactor.

It carries out the reaction D-serine = pyruvate + NH4(+). This is D-serine dehydratase from Salmonella agona (strain SL483).